A 78-amino-acid chain; its full sequence is Putative antitoxin PF1222 (78 aa).

This sequence belongs to the UPF0330 family.

Its function is as follows. Possibly the antitoxin component of a type II toxin-antitoxin (TA) system. This Pyrococcus furiosus (strain ATCC 43587 / DSM 3638 / JCM 8422 / Vc1) protein is Putative antitoxin PF1222.